The chain runs to 345 residues: Annexin A9 (345 aa).

Annexin repeat units follow at residues 41–112 (FSAD…ALLQ), 113–184 (PAAH…ALAK), 197–266 (NLAA…NLAS), and 270–341 (NTPL…ALCR).

Belongs to the annexin family. As to quaternary structure, homodimer.

In terms of biological role, may act as a low affinity receptor for acetylcholine. The chain is Annexin A9 (ANXA9) from Bos taurus (Bovine).